The following is a 362-amino-acid chain: Alanine racemase (362 aa).

Lysine 33 serves as the catalytic Proton acceptor; specific for D-alanine. At lysine 33 the chain carries N6-(pyridoxal phosphate)lysine. A substrate-binding site is contributed by arginine 129. The active-site Proton acceptor; specific for L-alanine is tyrosine 254. Residue methionine 302 participates in substrate binding.

It belongs to the alanine racemase family. It depends on pyridoxal 5'-phosphate as a cofactor.

It catalyses the reaction L-alanine = D-alanine. It functions in the pathway amino-acid biosynthesis; D-alanine biosynthesis; D-alanine from L-alanine: step 1/1. In terms of biological role, catalyzes the interconversion of L-alanine and D-alanine. May also act on other amino acids. The sequence is that of Alanine racemase (alr) from Xylella fastidiosa (strain 9a5c).